The primary structure comprises 243 residues: Phomoidride biosynthesis cluster protein B (243 aa).

Belongs to the tstB family.

In terms of biological role, phosphatidylethanolamine-binding protein; part of the gene cluster that mediates the biosynthesis of the antihypercholesterolemic agents phomoidrides which are dimeric anhydrides. Within the pathway, tstB is not essential for dimerization and its function has still to be determined. The pathway begins with the highly reducing polyketide synthase tstA that catalyzes the formation of a C12-fatty acyl-ACP, starting from one acetate and 5 malonate units. The hydrolase tstM is involved in the release of the C12-fatty acyl chain from phiA. The alkylcitrate synthase (ACS) tstJ and the alkylcitrate dehydratase (ACDH) tstI then give rise to decarboxylated monomeric anhydrides by coupling the C12-fatty acyl chain with oxalacetic acid. The cyclase tstC is responsible for the dimerization of the monomeric anhydrides which leads to the production of prephomoidride that contains the characteristic bicyclo[4.3.1]deca-1,6-diene system of phomoidrides. Iterative oxidation catalyzed by the alpha-ketoglutarate-dependent dioxygenase tstK produced then phomoidride A. Finally, the methyltransferase tstE converts phomoidride A to phomoidride B via an acetalization reaction. The phosphatidylethanolamine-binding protein tstB and tstN are not essential for dimerization and their functions have still to be determined. This is Phomoidride biosynthesis cluster protein B from Talaromyces stipitatus (strain ATCC 10500 / CBS 375.48 / QM 6759 / NRRL 1006) (Penicillium stipitatum).